We begin with the raw amino-acid sequence, 500 residues long: Endonuclease domain-containing 1 protein (500 aa).

The first 21 residues, 1 to 21 (MGTARWLALGSLFALAGLLEG), serve as a signal peptide directing secretion. The disordered stretch occupies residues 293-323 (ERMVQSQKSSSPLSSTRSKRSTLLPPEASEG). Residues 297–317 (QSQKSSSPLSSTRSKRSTLLP) show a composition bias toward low complexity. The residue at position 407 (K407) is an N6-acetyllysine.

This sequence belongs to the DNA/RNA non-specific endonuclease family. In terms of assembly, interacts with RNF26; this interaction is important to modulate innate immune signaling through the cGAS-STING pathway.

The protein localises to the secreted. Functionally, may act as a DNase and a RNase. Plays a role in the modulation of innate immune signaling through the cGAS-STING pathway by interacting with RNF26. The protein is Endonuclease domain-containing 1 protein (ENDOD1) of Homo sapiens (Human).